Consider the following 174-residue polypeptide: UPF0340 protein SH0921 (174 aa).

This sequence belongs to the UPF0340 family.

The sequence is that of UPF0340 protein SH0921 from Staphylococcus haemolyticus (strain JCSC1435).